The following is a 376-amino-acid chain: S-adenosylmethionine synthase (376 aa).

ATP is bound at residue His15. Residue Asp17 coordinates Mg(2+). Glu43 lines the K(+) pocket. Residues Glu56 and Gln92 each contribute to the L-methionine site. The tract at residues Gln92–Arg102 is flexible loop. ATP-binding positions include Asp156–Lys158, Asp231, Arg237–Lys238, Ala254, and Lys258. Asp231 contacts L-methionine. Lys262 contacts L-methionine.

This sequence belongs to the AdoMet synthase family. As to quaternary structure, homotetramer; dimer of dimers. It depends on Mg(2+) as a cofactor. K(+) serves as cofactor.

The protein resides in the cytoplasm. It carries out the reaction L-methionine + ATP + H2O = S-adenosyl-L-methionine + phosphate + diphosphate. The protein operates within amino-acid biosynthesis; S-adenosyl-L-methionine biosynthesis; S-adenosyl-L-methionine from L-methionine: step 1/1. Its function is as follows. Catalyzes the formation of S-adenosylmethionine (AdoMet) from methionine and ATP. The overall synthetic reaction is composed of two sequential steps, AdoMet formation and the subsequent tripolyphosphate hydrolysis which occurs prior to release of AdoMet from the enzyme. This Mycoplasmopsis pulmonis (strain UAB CTIP) (Mycoplasma pulmonis) protein is S-adenosylmethionine synthase.